A 281-amino-acid chain; its full sequence is 4-diphosphocytidyl-2-C-methyl-D-erythritol kinase (281 aa).

Residue K15 is part of the active site. 98–108 (PTGAGLGGGSS) serves as a coordination point for ATP. The active site involves D140.

Belongs to the GHMP kinase family. IspE subfamily.

It carries out the reaction 4-CDP-2-C-methyl-D-erythritol + ATP = 4-CDP-2-C-methyl-D-erythritol 2-phosphate + ADP + H(+). Its pathway is isoprenoid biosynthesis; isopentenyl diphosphate biosynthesis via DXP pathway; isopentenyl diphosphate from 1-deoxy-D-xylulose 5-phosphate: step 3/6. Its function is as follows. Catalyzes the phosphorylation of the position 2 hydroxy group of 4-diphosphocytidyl-2C-methyl-D-erythritol. This is 4-diphosphocytidyl-2-C-methyl-D-erythritol kinase from Neisseria meningitidis serogroup A / serotype 4A (strain DSM 15465 / Z2491).